Reading from the N-terminus, the 703-residue chain is Phenylalanine aminomutase (L-beta-phenylalanine forming) (703 aa).

Residue tyrosine 79 is the Proton donor/acceptor of the active site. The segment at residues 177 to 179 (ASG) is a cross-link (5-imidazolinone (Ala-Gly)). Residue serine 178 is modified to 2,3-didehydroalanine (Ser).

This sequence belongs to the PAL/histidase family. Contains an active site 4-methylidene-imidazol-5-one (MIO), which is formed autocatalytically by cyclization and dehydration of residues Ala-Ser-Gly.

The enzyme catalyses L-phenylalanine = L-beta-phenylalanine. Its pathway is mycotoxin biosynthesis. Functionally, phenylalanine aminomutase; part of the gene cluster that mediates the biosynthesis of the mycotoxin cyclochlorotine, a hepatotoxic and carcinogenic cyclic chlorinated pentapeptide. Within the pathway, cctP1 provides the uncommon building block beta-Phe from Phe. The NRPS cctN initially catalyzes the condensation of L-serine (Ser), Pro, L-2-aminobutyrate (2Abu), Ser, and beta-Phe in this order to produce isocyclotine. After the dichlorination of Pro2 catalyzed by cctP2 to produce isocyclochlorotine, the cctO-mediated transacylation of isocyclochlorotine can furnish cyclochlorotine. The subsequent hydroxylation of cyclochlorotine by cctR yields hydroxycyclochlorotine as the final product. CctP1 probably acts as a phenylalanine aminomutase and provides the uncommon building block beta-Phe. Furthermore, 2Abu can be synthesized from threonine by one of the threonine dehydratases and transaminases localized outside of the cluster. The functions of the remaining proteins encoded by the cluster, cctM and cctT, have not been identified yet. The chain is Phenylalanine aminomutase (L-beta-phenylalanine forming) from Talaromyces islandicus (Penicillium islandicum).